We begin with the raw amino-acid sequence, 217 residues long: 3,4-dihydroxy-2-butanone 4-phosphate synthase (217 aa).

D-ribulose 5-phosphate is bound by residues 37–38, D42, 150–154, and E174; these read RE and RGGHT. Mg(2+) is bound at residue E38. H153 contacts Mg(2+).

Belongs to the DHBP synthase family. Homodimer. It depends on Mg(2+) as a cofactor. Mn(2+) serves as cofactor.

The enzyme catalyses D-ribulose 5-phosphate = (2S)-2-hydroxy-3-oxobutyl phosphate + formate + H(+). It functions in the pathway cofactor biosynthesis; riboflavin biosynthesis; 2-hydroxy-3-oxobutyl phosphate from D-ribulose 5-phosphate: step 1/1. Functionally, catalyzes the conversion of D-ribulose 5-phosphate to formate and 3,4-dihydroxy-2-butanone 4-phosphate. This chain is 3,4-dihydroxy-2-butanone 4-phosphate synthase, found in Escherichia fergusonii (strain ATCC 35469 / DSM 13698 / CCUG 18766 / IAM 14443 / JCM 21226 / LMG 7866 / NBRC 102419 / NCTC 12128 / CDC 0568-73).